The chain runs to 454 residues: Growth/differentiation factor 9 (454 aa).

The N-terminal stretch at 1–24 (MARPNKFLLWFCCFAWLCFPISLG) is a signal peptide. A propeptide spanning residues 25–319 (SQASGGEAQI…GRSSHHRHRR (295 aa)) is cleaved from the precursor. N-linked (GlcNAc...) asparagine glycosylation is found at Asn-106, Asn-163, Asn-236, Asn-255, and Asn-268. Residues 303–330 (GEEAAEDGRSSHHRHRRGQETVSSELKK) are disordered. Ser-325 is subject to Phosphoserine; by CK. Asn-338 carries N-linked (GlcNAc...) asparagine glycosylation. 3 disulfide bridges follow: Cys-353-Cys-419, Cys-382-Cys-451, and Cys-386-Cys-453.

This sequence belongs to the TGF-beta family. Homodimer or heterodimer (Potential). But, in contrast to other members of this family, cannot be disulfide-linked. In terms of processing, phosphorylated; phosphorylation is critical for GDF9 function. In vitro, can be phosphorylated by CK at Ser-325. Expressed in ovarian granulosa cells. Present in oocytes of primary follicles (at protein level).

The protein localises to the secreted. Functionally, required for ovarian folliculogenesis. Promotes primordial follicle development. Stimulates granulosa cell proliferation. Promotes cell transition from G0/G1 to S and G2/M phases, through an increase of CCND1 and CCNE1 expression, and RB1 phosphorylation. It regulates STAR expression and cAMP-dependent progesterone release in granulosa and thecal cells. Attenuates the suppressive effects of activin A on STAR expression and progesterone production by increasing the expression of inhibin B. It suppresses FST and FSTL3 production in granulosa-lutein cells. The chain is Growth/differentiation factor 9 (GDF9) from Homo sapiens (Human).